The sequence spans 414 residues: Transcriptional repressor protein YY1 (414 aa).

The interaction with the SMAD1/SMAD4 complex stretch occupies residues 1-170 (MASGDTLYIA…SGGGASSGGG (170 aa)). Residues 32–41 (PVETIETTVV) are compositionally biased toward low complexity. The segment at 32–83 (PVETIETTVVGEEEEEDDDDEDGGGGDHGGGGGGHGHAGHHHHHHHHHHHHP) is disordered. A compositionally biased stretch (acidic residues) spans 42–55 (GEEEEEDDDDEDGG). Residues 57–67 (GDHGGGGGGHG) are compositionally biased toward gly residues. The segment covering 68-83 (HAGHHHHHHHHHHHHP) has biased composition (basic residues). Positions 118-260 (DDSDGLRAED…YSEYMTGKKL (143 aa)) are gly-rich region involved in interaction with HCFC1. Phosphoserine is present on Ser-120. Residues 159–203 (GKSGGGASSGGGRVKKGGGKKSGKKSYLGGGAGAAGGGGADPGNK) form a disordered region. Residues 160–170 (KSGGGASSGGG) are compositionally biased toward gly residues. Residues 171–182 (RVKKGGGKKSGK) are compositionally biased toward basic residues. Residues Lys-182 and Lys-183 each participate in a glycyl lysine isopeptide (Lys-Gly) (interchain with G-Cter in SUMO2) cross-link. The span at 186-199 (LGGGAGAAGGGGAD) shows a compositional bias: gly residues. Glycyl lysine isopeptide (Lys-Gly) (interchain with G-Cter in SUMO2) cross-links involve residues Lys-208 and Lys-230. Ser-247 bears the Phosphoserine mark. Residues 257 to 341 (GKKLPPGGIP…KAFVESSKLK (85 aa)) form an involved in nuclear matrix association region. Residues Lys-286 and Lys-288 each participate in a glycyl lysine isopeptide (Lys-Gly) (interchain with G-Cter in SUMO2) cross-link. The binding to DNA stretch occupies residues 295–414 (TIACPHKGCT…LTHAKAKNNQ (120 aa)). 3 C2H2-type zinc fingers span residues 296–320 (IACP…LHTH), 325–347 (HVCA…QLVH), and 353–377 (FQCT…VRIH). Zn(2+)-binding residues include Cys-298, Cys-303, His-316, His-320, Cys-327, Cys-330, His-343, His-347, Cys-355, Cys-360, His-373, and His-377. Residues 333-371 (AFVESSKLKRHQLVHTGEKPFQCTFEGCGKRFSLDFNLR) are involved in repression of activated transcription. An involved in masking transactivation domain region spans residues 371–397 (RTHVRIHTGDRPYVCPFDGCNKKFAQS). The residue at position 378 (Thr-378) is a Phosphothreonine. The segment at 383–407 (YVCPFDGCNKKFAQSTNLKSHILTH) adopts a C2H2-type 4 zinc-finger fold. Zn(2+)-binding residues include Cys-385, Cys-390, His-403, and His-407. Residues Lys-409 and Lys-411 each participate in a glycyl lysine isopeptide (Lys-Gly) (interchain with G-Cter in SUMO2) cross-link.

The protein belongs to the YY transcription factor family. Interacts with YAF2 through the region encompassing the first and second zinc fingers. Component of the chromatin remodeling INO80 complex; specifically part of a complex module associated with the DBINO domain of INO80. Interacts with EED and EZH2; the interactions are indicative for an association with the PRC2/EED-EZH2 complex. Found in a complex with SMAD1 and SMAD4. Interacts with SFMBT2. Found in a complex with YY1, SIN3A and HDAC1. Accessory component of the polycomb repressive deubiquitinase (PR-DUB) complex, at least composed of BAP1, one of ASXL1, ASXL2 or (probably) ASXL3 and one of MBD5 or MBD6; the PR-DUB core associates with a number of accessory proteins, including FOXK1, FOXK2, KDM1B, HCFC1, YY1 and OGT. Interacts (via Gly-rich region) with HCFC1; the interaction is direct. Interacts (via C-terminal zinc-finger domains) with BAP1 (via ULD domain); the interaction is direct and requires HCFC1. Post-translationally, transiently poly-ADP-ribosylated by PARP1 upon DNA damage, with the effect of decreasing affinity of YY1 to its cognate DNA binding sites. Ubiquitinated. In terms of processing, phosphorylation at Ser-120 by CK2 prevents proteolytic cleavage by caspase-7 (CASP7) during apoptosis. Post-translationally, proteolytically cleaved by caspase-7 (CASP7) in response to apoptosis. Phosphorylation at Ser-120 protects against proteolytic cleavage. In terms of tissue distribution, expressed in ovary and, at lower levels, in testis.

It localises to the nucleus. The protein localises to the nucleus matrix. The protein resides in the cytoplasm. In terms of biological role, multifunctional transcription factor that exhibits positive and negative control on a large number of cellular and viral genes by binding to sites overlapping the transcription start site. Binds to the consensus sequence 5'-CCGCCATNTT-3'; some genes have been shown to contain a longer binding motif allowing enhanced binding; the initial CG dinucleotide can be methylated greatly reducing the binding affinity. The effect on transcription regulation is depending upon the context in which it binds and diverse mechanisms of action include direct activation or repression, indirect activation or repression via cofactor recruitment, or activation or repression by disruption of binding sites or conformational DNA changes. Its activity is regulated by transcription factors and cytoplasmic proteins that have been shown to abrogate or completely inhibit YY1-mediated activation or repression. Binds to the upstream conserved region (UCR) (5'-CGCCATTTT-3') of Moloney murine leukemia virus (MuLV). Acts synergistically with the SMAD1 and SMAD4 in bone morphogenetic protein (BMP)-mediated cardiac-specific gene expression. Binds to SMAD binding elements (SBEs) (5'-GTCT/AGAC-3') within BMP response element (BMPRE) of cardiac activating regions. Proposed to recruit the PRC2/EED-EZH2 complex to target genes that are transcriptional repressed. Involved in DNA repair. In vitro, binds to DNA recombination intermediate structures (Holliday junctions). Involved in spermatogenesis and may play a role in meiotic DNA double-strand break repair. Plays a role in regulating enhancer activation. Recruits the PR-DUB complex to specific gene-regulatory regions. Its function is as follows. Proposed core component of the chromatin remodeling INO80 complex which is involved in transcriptional regulation, DNA replication and probably DNA repair; proposed to target the INO80 complex to YY1-responsive elements. This chain is Transcriptional repressor protein YY1 (Yy1), found in Mus musculus (Mouse).